The following is a 257-amino-acid chain: uncharacterized protein (257 aa).

The N-terminal stretch at 1–22 (MIHSKRLKMCLCLIILSVFIGA) is a signal peptide. Cys-23 carries the N-palmitoyl cysteine lipid modification. Cys-23 carries the S-diacylglycerol cysteine lipid modification.

It belongs to the staphylococcal tandem lipoprotein family.

The protein localises to the cell membrane. This is an uncharacterized protein from Staphylococcus aureus (strain MRSA252).